A 206-amino-acid chain; its full sequence is Thymidylate kinase (206 aa).

Residue 10-17 (GNDGSGKS) participates in ATP binding.

Belongs to the thymidylate kinase family.

It carries out the reaction dTMP + ATP = dTDP + ADP. In terms of biological role, phosphorylation of dTMP to form dTDP in both de novo and salvage pathways of dTTP synthesis. This Caldicellulosiruptor saccharolyticus (strain ATCC 43494 / DSM 8903 / Tp8T 6331) protein is Thymidylate kinase.